A 382-amino-acid chain; its full sequence is Mannitol-1-phosphate 5-dehydrogenase (382 aa).

3–14 (ALHFGAGNIGRG) serves as a coordination point for NAD(+). Lysine 269 is modified (N6-acetyllysine).

The protein belongs to the mannitol dehydrogenase family.

It carries out the reaction D-mannitol 1-phosphate + NAD(+) = beta-D-fructose 6-phosphate + NADH + H(+). The protein is Mannitol-1-phosphate 5-dehydrogenase of Escherichia coli O45:K1 (strain S88 / ExPEC).